A 106-amino-acid polypeptide reads, in one-letter code: DNA-directed RNA polymerase subunit Rpo6 (106 aa).

It belongs to the archaeal Rpo6/eukaryotic RPB6 RNA polymerase subunit family. Part of the RNA polymerase complex.

The protein localises to the cytoplasm. The enzyme catalyses RNA(n) + a ribonucleoside 5'-triphosphate = RNA(n+1) + diphosphate. DNA-dependent RNA polymerase (RNAP) catalyzes the transcription of DNA into RNA using the four ribonucleoside triphosphates as substrates. In Pyrobaculum aerophilum (strain ATCC 51768 / DSM 7523 / JCM 9630 / CIP 104966 / NBRC 100827 / IM2), this protein is DNA-directed RNA polymerase subunit Rpo6.